Consider the following 369-residue polypeptide: Uroporphyrinogen decarboxylase (369 aa).

Residues 28 to 32, D78, Y154, S209, and H339 contribute to the substrate site; that span reads RQAGR.

It belongs to the uroporphyrinogen decarboxylase family. In terms of assembly, homodimer.

The protein localises to the cytoplasm. It catalyses the reaction uroporphyrinogen III + 4 H(+) = coproporphyrinogen III + 4 CO2. Its pathway is porphyrin-containing compound metabolism; protoporphyrin-IX biosynthesis; coproporphyrinogen-III from 5-aminolevulinate: step 4/4. Its function is as follows. Catalyzes the decarboxylation of four acetate groups of uroporphyrinogen-III to yield coproporphyrinogen-III. This is Uroporphyrinogen decarboxylase from Polaromonas sp. (strain JS666 / ATCC BAA-500).